The primary structure comprises 116 residues: Large ribosomal subunit protein bL17 (116 aa).

Belongs to the bacterial ribosomal protein bL17 family. In terms of assembly, part of the 50S ribosomal subunit. Contacts protein L32.

In Prochlorococcus marinus (strain SARG / CCMP1375 / SS120), this protein is Large ribosomal subunit protein bL17.